The chain runs to 895 residues: MVQRMWAEASGPIGGAEPLFPGSRRSRSVWDAVRLEVGVPDSCPVVLHSFTQLDPDLPRLESSTQEIGEELINGVIYSISLRKVQLYPGATKGQRWLGCENESALNLYETCKVRTVKAGTLEKLVEHLVPAFQGSDLSYVTVFLCTYRAFTTTQQVLDLLFKRYGCILPYSSEDGGPQDQLKNAISSILGTWLDQYSEDFCQPPDFPCLKQLVAYVQLNMPGSDLERRAHLLLAQLEDLEPSEVEPEALSPAPVLSLKPASQLEPAPALLLTPSRAVASTPVREPAPVPVLASSPVVAPASELEPALEPPLDPEPTLAPAPELDPTVSQSLHLEPAPVPAPALEPSWPLPETTENGLCAKPHLLLFPPDLVAEQFTLMDAELFKKVVPYHCLGSIWSQRAKKGKEHLAPTIRATVAQFNNVANCVITTCLGDQSMKASDRARVVEHWIEVARECRVLKNFSSLYAILSALQSNAIHRLKKTWEEVSRGSFRVFQKLSEIFSDENNYSLSRELLIKEGTSKFATLEMNPRRTQRRQKETGVIQGTVPYLGTFLTDLVMLDTAMKDYLYGRLINFEKRRKEFEVIAQIKLLQSACNNYSIVPEEHFGAWFRAMGRLSEAESYNLSCELEPPSESASNTLRSKKSTAIVKRWERRQAPSTELSTSSSAHSKSCDQLRCSPYLSSGDITDALSVHSAGSSTSDVEEINMSFVPESPDGQEKKFWESASQSSPETSGISSASSSTSSSSASTTPVSTTRTHKRSVSGVCSYSSSLPLYNQQVGDCCIIRVSLDVDNGNMYKSILVTSQDKAPTVIRKAMDKHNLDEDEPEDYELLQIISEDHKLKIPENANVFYAMNSAANYDFILKKRAFTKGAKVKHGASSTLPRMKQKGLRIARGIF.

Residues 112–237 (KVRTVKAGTL…RAHLLLAQLE (126 aa)) enclose the N-terminal Ras-GEF domain. The tract at residues 301–324 (SELEPALEPPLDPEPTLAPAPELD) is disordered. Positions 307–318 (LEPPLDPEPTLA) are enriched in pro residues. The region spanning 367–629 (PPDLVAEQFT…YNLSCELEPP (263 aa)) is the Ras-GEF domain. Disordered regions lie at residues 650 to 669 (ERRQ…HSKS) and 708 to 754 (VPES…STTR). Low complexity-rich tracts occupy residues 656–667 (STELSTSSSAHS) and 726–753 (SSPE…VSTT). The Ras-associating domain maps to 779–866 (DCCIIRVSLD…YDFILKKRAF (88 aa)). The residue at position 795 (Tyr795) is a Phosphotyrosine.

As to quaternary structure, interacts with RIT1 and RIT2. Interacts with TRAF3. Interacts with HRAS. Post-translationally, phosphorylation of Tyr-795 by MET blocks HRAS binding. Expressed in all tissues examined.

Its subcellular location is the cytoplasm. The protein localises to the nucleus. In terms of biological role, functions as a guanine nucleotide exchange factor (GEF) activating either RalA or RalB GTPases and plays an important role in intracellular transport. Interacts and acts as an effector molecule for R-Ras, H-Ras, K-Ras, and Rap. During bacterial clearance, recognizes 'Lys-33'-linked polyubiquitinated TRAF3 and subsequently mediates assembly of the exocyst complex. The chain is Ral guanine nucleotide dissociation stimulator (Ralgds) from Rattus norvegicus (Rat).